The primary structure comprises 513 residues: Xyloglucan 6-xylosyltransferase 4 (513 aa).

Residues 1–39 (MFQDGSRSSGSGRGLSTTAVSNGGWRTRGFLRGWQIQNT) are Cytoplasmic-facing. A helical; Signal-anchor for type II membrane protein membrane pass occupies residues 40–60 (LFNNIKFMILCCFVTILILLG). The Lumenal portion of the chain corresponds to 61-513 (TIRVGNLGSS…IRRMHMETKP (453 aa)). Asparagine 76, asparagine 110, asparagine 142, asparagine 174, and asparagine 490 each carry an N-linked (GlcNAc...) asparagine glycan.

The protein belongs to the glycosyltransferase 34 family.

It localises to the golgi apparatus membrane. It carries out the reaction Transfers an alpha-D-xylosyl residue from UDP-D-xylose to a glucose residue in xyloglucan, forming an alpha-(1-&gt;6)-D-xylosyl-D-glucose linkage.. Its function is as follows. Xylosyltransferase specific to UDP-D-xylose that accepts cellohexaose as substrate to produce xyloglucan. The polypeptide is Xyloglucan 6-xylosyltransferase 4 (Arabidopsis thaliana (Mouse-ear cress)).